The sequence spans 249 residues: Metallo-beta-lactamase type 2 (249 aa).

An N-terminal signal peptide occupies residues 1–22; that stretch reads MLKRLKGLLVLALGFTGLQVFG. Zn(2+) contacts are provided by histidine 98, histidine 100, aspartate 102, histidine 161, and cysteine 180. Lysine 183 contacts substrate. Histidine 222 contributes to the Zn(2+) binding site.

This sequence belongs to the metallo-beta-lactamase superfamily. Class-B beta-lactamase family. Monomer. Requires Zn(2+) as cofactor.

It is found in the periplasm. It catalyses the reaction a beta-lactam + H2O = a substituted beta-amino acid. In terms of biological role, confers resistance to the different beta-lactams antibiotics (penicillin, cephalosporin and carbapenem) via the hydrolysis of the beta-lactam ring. In Elizabethkingia meningoseptica (Chryseobacterium meningosepticum), this protein is Metallo-beta-lactamase type 2 (blaB5).